Reading from the N-terminus, the 71-residue chain is Gas vesicle protein A (71 aa).

Residues 12–22 (LAEVIDRILDK) are alpha helix 1. The segment at 26–34 (IDAWARVSL) is beta-strand 1. The beta turn stretch occupies residues 35-37 (VGI). The interval 38 to 46 (ELLAIEARV) is beta-strand 2. An alpha helix 2 region spans residues 51-70 (VETYLKYAEAVGLTQXAXXA).

It belongs to the gas vesicle GvpA family. In terms of assembly, the gas vesicle shell is 2 nm thick and consists of a single layer of this protein. It forms helical ribs nearly perpendicular to the long axis of the vesicle.

The protein localises to the gas vesicle shell. Gas vesicles are hollow, gas filled proteinaceous nanostructures found in some microorganisms. During planktonic growth they allow positioning of the organism at a favorable depth for light or nutrient acquisition. GvpA forms the protein shell. The sequence is that of Gas vesicle protein A from Microcystis sp. (strain BC 84/1).